We begin with the raw amino-acid sequence, 540 residues long: Bifunctional pantoate ligase/cytidylate kinase (540 aa).

The interval 1-280 is pantoate--beta-alanine ligase; it reads MQWLRTVAAL…VGQTRLIDNL (280 aa). 28–35 is an ATP binding site; the sequence is MGSLHEGH. The active-site Proton donor is His-35. Gln-59 contributes to the (R)-pantoate binding site. Beta-alanine is bound at residue Gln-59. Position 150–153 (150–153) interacts with ATP; the sequence is GQKD. Gln-156 is a (R)-pantoate binding site. ATP is bound by residues Val-179 and 187–190; that span reads YSSR. Residues 281–540 are cytidylate kinase; sequence LLSPEGVDPL…RSGAAHFDII (260 aa). The segment at 288-307 is disordered; it reads DPLPQEQQSAVPPSPKRGRR.

In the N-terminal section; belongs to the pantothenate synthetase family. This sequence in the C-terminal section; belongs to the cytidylate kinase family. Type 1 subfamily.

Its subcellular location is the cytoplasm. The catalysed reaction is (R)-pantoate + beta-alanine + ATP = (R)-pantothenate + AMP + diphosphate + H(+). It carries out the reaction CMP + ATP = CDP + ADP. The enzyme catalyses dCMP + ATP = dCDP + ADP. It functions in the pathway cofactor biosynthesis; (R)-pantothenate biosynthesis; (R)-pantothenate from (R)-pantoate and beta-alanine: step 1/1. Catalyzes the condensation of pantoate with beta-alanine in an ATP-dependent reaction via a pantoyl-adenylate intermediate. Its function is as follows. Catalyzes the transfer of a phosphate group from ATP to either CMP or dCMP to form CDP or dCDP and ADP, respectively. The sequence is that of Bifunctional pantoate ligase/cytidylate kinase from Synechococcus sp. (strain JA-3-3Ab) (Cyanobacteria bacterium Yellowstone A-Prime).